A 638-amino-acid chain; its full sequence is ABC transporter G family member 12 (638 aa).

Residues 42 to 61 (KQEKAKKKNDTESSTGDMNT) form a disordered region. Residues 58 to 301 (DMNTGVSTTI…SLGYPCPNNT (244 aa)) form the ABC transporter domain. Residue 91 to 98 (GPSGSGKS) participates in ATP binding. Residues 374 to 633 (GNFVARVGTA…WTSYLALHFL (260 aa)) enclose the ABC transmembrane type-2 domain. Transmembrane regions (helical) follow at residues 376 to 396 (FVAR…CFAG), 410 to 430 (TIFF…SLFL), 459 to 479 (TLIV…FAHL), 484 to 504 (GHFF…DFMI), 516 to 536 (MTFA…GFYV), 544 to 564 (SFGW…LVVN), and 612 to 632 (FGVV…ALHF).

Belongs to the ABC transporter superfamily. ABCG family. Eye pigment precursor importer (TC 3.A.1.204) subfamily.

The protein resides in the membrane. The chain is ABC transporter G family member 12 (abcG12) from Dictyostelium discoideum (Social amoeba).